A 486-amino-acid chain; its full sequence is Vicilin-like seed storage protein At3g22640 (486 aa).

An N-terminal signal peptide occupies residues 1 to 22 (MAITNKLIITLLLLISIAVVHC). The disordered stretch occupies residues 34 to 60 (PPQQGEQEGPRRRPGGGSGEGWEEEST). 2 consecutive Cupin type-1 domains span residues 64–223 (YHFR…ELLG) and 278–448 (FNLF…KVAE). N-linked (GlcNAc...) asparagine glycans are attached at residues Asn-168, Asn-316, and Asn-455.

Belongs to the 7S seed storage protein family. As to expression, predominantly expressed in the embryo and endosperm of developing seeds. Also present in seedlings.

Functionally, seed storage protein. Its function is as follows. (Microbial infection) Involved in tobacco mosaic virus (TMV) replication. Required for endoplasmic reticulum (ER) aggregations mediated by TMV main replicase (P126) upon viral infection. This is Vicilin-like seed storage protein At3g22640 from Arabidopsis thaliana (Mouse-ear cress).